The chain runs to 347 residues: Homoisocitrate dehydrogenase (347 aa).

68–70 (ITS) is an NADH binding site. (2R,3S)-homoisocitrate is bound at residue Ser70. At Ser81 the chain carries Phosphoserine. (2R,3S)-homoisocitrate-binding residues include Arg87, Arg97, Arg128, Tyr135, Lys181, and Asn183. Residue Asn183 participates in NADH binding. Asp213, Asp237, and Asp241 together coordinate Mg(2+). NADH-binding positions include 270-274 (GSAPD) and Asn282.

This sequence belongs to the isocitrate and isopropylmalate dehydrogenases family. Mg(2+) is required as a cofactor.

The enzyme catalyses (2R,3S)-homoisocitrate + NAD(+) = 2-oxoadipate + CO2 + NADH. It carries out the reaction (2R,3S)-iso(homo)2citrate + NAD(+) = 2-oxoheptanedioate + CO2 + NADH. The catalysed reaction is (2R,3S)-iso(homo)3citrate + NAD(+) = 2-oxosuberate + CO2 + NADH. It participates in organic acid metabolism; 2-oxosuberate biosynthesis. Catalyzes the NAD-dependent oxidation and decarboxylation of (2R,3S)-homoisocitrate, (2R,3S)-homo(2)-isocitrate and (2R,3S)-homo(3)-isocitrate, into 2-oxoadipate, 2-oxopimelate (2-oxoheptanedioate), and 2-oxosuberate, respectively. All these substrates are intermediates in the biosynthesis of biotin and of 7-mercaptoheptanoate, a moiety of coenzyme B in methanoarchaea. Is also able to produce 2-oxoazelate from (2R,3S)-homo(4)-isocitrate in vitro, but this substrate is probably not physiologically relevant. Is unable to use any isomer of isocitrate or isopropylmalate as a substrate, and NADP as an oxidant. In Methanocaldococcus jannaschii (strain ATCC 43067 / DSM 2661 / JAL-1 / JCM 10045 / NBRC 100440) (Methanococcus jannaschii), this protein is Homoisocitrate dehydrogenase (aksF).